The following is an 804-amino-acid chain: MANPIRKLVDNSKKQLKKLNHIADKVEDYADEMAALSDEALQAKTPVFKEKIADALRDVTETDKQNKVLAKTLDALLPEAFAVAREAAKRVLGLYPFRVQIMGAAVLNDGNLAEMRTGEGKTLTATMAVYLNALTDRGVHVVTVNDYLSARDAEQMGQLYNWLGLSVGVNVGDAPAEEKRAAYDADITYSTNFNIGFDYLRDNMVRRAEERVMQRGLNFALIDEADSILIDTARTPLIISGPGSGVSQLYGRADRFVKTLQQDEDYKIDEEAKTTMLTNDGIHKGEIFFNLDNLYDAGDTALTHHIDQALRANFNYINDKDYVVQDGEVKLIDQSTGRISEGTRLSDGLHQAIEAKEGVEIQEENKSMAQITYQNLFRMYKKLSGMTGTAKTEEEELREIYNMEVITIPTNRPIKRVDYPDLLYPSIRAKYNAVVKLIQELHEKGQPILIGTGSVESSELLSKILMAQNVPHNVLNAKNNAKEAEIIANAGQRGAVTVATNMAGRGTDIKLGPGVADLGGLAVIATERHESRRIDNQLRGRAGRQGDDGFSQFFLSLEDDLMIRFGAERIRAVWERMNLDEEETVIKNRLITRSVESAQKRVEGNNYDTRKNVLQYDDVVREQRELIYHQRDIIIDESQSLDWVLMPMVSRTINRVVTVQTKSKKPSEWQLQQIIVFAENVLVNEGALTENDLSGLSREDIEAKLYALAKENYANKKRQLYEPEQMLEFEKVVILRAVDQHWTDHIDALDRLRQGVGLRGYGQLNPLIEYQNEAFENFNKMIADVEYDATRTFMKAEIRQNLKA.

Residues Q100, 118 to 122 (GEGKT), and D508 each bind ATP.

This sequence belongs to the SecA family. As to quaternary structure, monomer and homodimer. Part of the essential Sec protein translocation apparatus which comprises SecA, SecYEG and auxiliary proteins SecDF. Other proteins may also be involved.

It is found in the cell membrane. Its subcellular location is the cytoplasm. It catalyses the reaction ATP + H2O + cellular proteinSide 1 = ADP + phosphate + cellular proteinSide 2.. Its function is as follows. Part of the Sec protein translocase complex. Interacts with the SecYEG preprotein conducting channel. Has a central role in coupling the hydrolysis of ATP to the transfer of proteins into and across the cell membrane, serving as an ATP-driven molecular motor driving the stepwise translocation of polypeptide chains across the membrane. In Leuconostoc citreum (strain KM20), this protein is Protein translocase subunit SecA.